Reading from the N-terminus, the 63-residue chain is uncharacterized protein (63 aa).

Residues 37 to 57 (IFFPTTFDVLLLAILIFLACA) form a helical membrane-spanning segment.

It is found in the cell membrane. This is an uncharacterized protein from Bacillus subtilis (strain 168).